A 433-amino-acid chain; its full sequence is Serine--tRNA ligase (433 aa).

Position 235 to 237 (235 to 237 (TSE)) interacts with L-serine. Position 266-268 (266-268 (RSE)) interacts with ATP. Residue Glu-289 participates in L-serine binding. Residue 353 to 356 (EISS) participates in ATP binding. Ser-388 is a binding site for L-serine.

This sequence belongs to the class-II aminoacyl-tRNA synthetase family. Type-1 seryl-tRNA synthetase subfamily. In terms of assembly, homodimer. The tRNA molecule binds across the dimer.

It localises to the cytoplasm. It catalyses the reaction tRNA(Ser) + L-serine + ATP = L-seryl-tRNA(Ser) + AMP + diphosphate + H(+). The enzyme catalyses tRNA(Sec) + L-serine + ATP = L-seryl-tRNA(Sec) + AMP + diphosphate + H(+). The protein operates within aminoacyl-tRNA biosynthesis; selenocysteinyl-tRNA(Sec) biosynthesis; L-seryl-tRNA(Sec) from L-serine and tRNA(Sec): step 1/1. Catalyzes the attachment of serine to tRNA(Ser). Is also able to aminoacylate tRNA(Sec) with serine, to form the misacylated tRNA L-seryl-tRNA(Sec), which will be further converted into selenocysteinyl-tRNA(Sec). In Burkholderia pseudomallei (strain 1106a), this protein is Serine--tRNA ligase.